A 232-amino-acid polypeptide reads, in one-letter code: Rhamnogalacturonan acetylesterase RhgT (232 aa).

The active-site Nucleophile is Ser14. Active-site residues include Glu191 and His195.

It belongs to the 'GDSL' lipolytic enzyme family. Monomer.

Almost completely inhibited by diethylpyrocarbonate at 5 mM and completely inhibited by phenylmethylsulfonyl fluoride (PMSF) at 50 mM. Dimethyl phosphite achieves only a 53% inhibition. Also inhibited by metal ions (magnesium, manganese and calcium) and chelating agent (EDTA) at the same level. In terms of biological role, may play a role in the degradation of type I rhamnogalacturonan derived from plant cell walls. This enzyme has a broad substrate specificity, and shows strong preference for glucose pentaacetate, beta-naphthylacetate, and p-nitrophenyl acetate (pNPA). Also active toward acetylated xylan. This is Rhamnogalacturonan acetylesterase RhgT (rhgT) from Bacillus subtilis (strain 168).